We begin with the raw amino-acid sequence, 354 residues long: P2Y purinoceptor 13 (354 aa).

Topologically, residues 1–49 are extracellular; it reads MTAAIRRQRELSILPKVTLEAMNTTVMQGFNRSERCPRDTRIVQLVFPA. Asn23 and Asn31 each carry an N-linked (GlcNAc...) asparagine glycan. A helical membrane pass occupies residues 50–70; the sequence is LYTVVFLTGILLNTLALWVFV. Over 71–77 the chain is Cytoplasmic; it reads HIPSSST. A helical transmembrane segment spans residues 78-98; it reads FIIYLKNTLVADLIMTLMLPF. The Extracellular portion of the chain corresponds to 99 to 117; that stretch reads KILSDSHLAPWQLRAFVCR. Residues Cys116 and Cys194 are joined by a disulfide bond. The chain crosses the membrane as a helical span at residues 118–138; it reads FSSVIFYETMYVGIVLLGLIA. Residues 139 to 161 lie on the Cytoplasmic side of the membrane; that stretch reads FDRFLKIIRPLRNIFLKKPVFAK. A helical transmembrane segment spans residues 162 to 182; the sequence is TVSIFIWFFLFFISLPNTILS. The Extracellular segment spans residues 183-211; sequence NKEATPSSVKKCASLKGPLGLKWHQMVNN. A helical membrane pass occupies residues 212–232; sequence ICQFIFWTVFILMLVFYVVIA. Over 233–252 the chain is Cytoplasmic; the sequence is KKVYDSYRKSKSKDRKNNKK. The chain crosses the membrane as a helical span at residues 253–273; that stretch reads LEGKVFVVVAVFFVCFAPFHF. Over 274-300 the chain is Extracellular; it reads ARVPYTHSQTNNKTDCRLQNQLFIAKE. The N-linked (GlcNAc...) asparagine glycan is linked to Asn285. A helical membrane pass occupies residues 301 to 321; sequence TTLFLAATNICMDPLIYIFLC. Topologically, residues 322–333 are cytoplasmic; sequence KKFTEKLPCMQG. The interval 335-354 is disordered; the sequence is KTTASSQENHSSQTDNITLG.

It belongs to the G-protein coupled receptor 1 family. Strong expression in spleen and adult brain. Lower expression in placenta, lung, liver, spinal cord, thymus, small intestine, uterus, stomach, testis, fetal brain, and adrenal gland. Not detected in pancreas, heart, kidney, skeletal muscle, ovary or fetal aorta. Clearly detected in lymph node and bone marrow, weakly detected in peripheral blood mononuclear cells (PBMC) and in peripheral blood leukocytes (PBL), but not detected in polymorphonuclear cells (PMN). In the brain, detected in all brain regions examined.

The protein localises to the cell membrane. In terms of biological role, receptor for ADP. Coupled to G(i)-proteins. May play a role in hematopoiesis and the immune system. This Homo sapiens (Human) protein is P2Y purinoceptor 13 (P2RY13).